We begin with the raw amino-acid sequence, 106 residues long: Large ribosomal subunit protein uL24 (106 aa).

The protein belongs to the universal ribosomal protein uL24 family. As to quaternary structure, part of the 50S ribosomal subunit.

Functionally, one of two assembly initiator proteins, it binds directly to the 5'-end of the 23S rRNA, where it nucleates assembly of the 50S subunit. Its function is as follows. One of the proteins that surrounds the polypeptide exit tunnel on the outside of the subunit. In Porphyromonas gingivalis (strain ATCC 33277 / DSM 20709 / CIP 103683 / JCM 12257 / NCTC 11834 / 2561), this protein is Large ribosomal subunit protein uL24.